Here is a 336-residue protein sequence, read N- to C-terminus: Mitochondrial thiamine diphosphate carrier 2 (336 aa).

6 helical membrane-spanning segments follow: residues 11–27 (RRALVDSLAGAISGGIS), 88–105 (VPALLMYMPYTAIQFTVL), 127–150 (YLSYVSGALAGCAATIGSYPFDLL), 182–199 (LYSGLSPTLVEIIPYAGL), 230–246 (SVSSFQLFLCGFAAGTF), and 303–322 (GLFPSLVKSAPAGAVTFVAY). Solcar repeat units lie at residues 11–111 (RRAL…LKTF), 124–210 (LSPY…FKRS), and 231–328 (VSSF…ISDW).

Belongs to the mitochondrial carrier (TC 2.A.29) family. As to expression, ubiquitous.

The protein localises to the mitochondrion inner membrane. Functionally, mitochondrial transporter that mediates uptake of thiamine diphosphate (ThDP) into mitochondria. This chain is Mitochondrial thiamine diphosphate carrier 2, found in Zea mays (Maize).